Reading from the N-terminus, the 469-residue chain is Putative dipeptidase SAR1836 (469 aa).

His-84 is a Zn(2+) binding site. The active site involves Asp-86. A Zn(2+)-binding site is contributed by Asp-115. Glu-149 (proton acceptor) is an active-site residue. Zn(2+) contacts are provided by Glu-150, Asp-173, and His-440.

It belongs to the peptidase M20A family. The cofactor is Zn(2+).

The chain is Putative dipeptidase SAR1836 from Staphylococcus aureus (strain MRSA252).